Reading from the N-terminus, the 142-residue chain is MALAVNFKTYVDQACRAAEEFVNIYYETMDKRRHALVRLYLDKATLIWNGNVVTGLEALANFFEMLPSSEFQINMLDCQPVHEQATQCQTTVLVVTSGVVKFDGNKQHFFNQNFLLTAQSTPNSTVWKIASDCFRFQDWASI.

The region spanning 17–136 (AAEEFVNIYY…WKIASDCFRF (120 aa)) is the NTF2 domain.

Associates with NXF1, NXF2, NXF3 and NXF5.

The protein localises to the nucleus. The protein resides in the cytoplasm. Functionally, regulator of protein export for NES-containing proteins. Also plays a role in mRNA nuclear export. This Mus musculus (Mouse) protein is NTF2-related export protein 2 (Nxt2).